A 744-amino-acid chain; its full sequence is Tripartite motif-containing protein 2 (744 aa).

S10 bears the Phosphoserine mark. An RING-type zinc finger spans residues 23–64 (CSICLERYKNPKVLPCLHTFCERCLQNYIPAHSLTLSCPVCR). A B box-type zinc finger spans residues 113–154 (GKPLSCPNHDGNVMDFYCQSCETAMCRECTEGEHAEHPTVPL). Zn(2+) contacts are provided by C118, H121, C141, and H146. One copy of the Filamin repeat lies at 320–421 (TTNAVASETV…IRGSPFKLKV (102 aa)). Phosphothreonine is present on T371. Phosphoserine occurs at positions 375, 424, and 428. The segment at 432 to 462 (EGVKRRVKSPGSGHVKQKAVKRPASMYSTGK) is disordered. NHL repeat units lie at residues 473-516 (IFRV…FSND), 520-563 (KSRF…FSSD), 564-605 (GKFK…FQPN), 609-652 (VTRF…FNQE), 656-699 (MLKF…FDGS), and 700-743 (GSFL…YRYL).

The protein belongs to the TRIM/RBCC family. As to quaternary structure, forms homooligomers. Interacts with TRIM3; this interaction reduces TRIM2 activity. Interacts with myosin V; myosin V may not be a substrate for ubiquitination. Interacts with NEFL. Interacts with phosphorylated BCL2L11. Interacts with SIRPA. RING-type zinc finger-dependent and UBE2D1-dependent autoubiquitination.

Its subcellular location is the cytoplasm. It carries out the reaction S-ubiquitinyl-[E2 ubiquitin-conjugating enzyme]-L-cysteine + [acceptor protein]-L-lysine = [E2 ubiquitin-conjugating enzyme]-L-cysteine + N(6)-ubiquitinyl-[acceptor protein]-L-lysine.. It participates in protein modification; protein ubiquitination. Functionally, UBE2D1-dependent E3 ubiquitin-protein ligase that mediates the ubiquitination of NEFL and of phosphorylated BCL2L11. Plays a neuroprotective function. May play a role in neuronal rapid ischemic tolerance. Plays a role in antiviral immunity and limits New World arenavirus infection independently of its ubiquitin ligase activity. The chain is Tripartite motif-containing protein 2 (TRIM2) from Ailuropoda melanoleuca (Giant panda).